We begin with the raw amino-acid sequence, 603 residues long: MPVRQLPETVVNRIAAGEVVERPASVVKELVENAIDAGATRIDVFTDGGGRRRIGVTDDGAGMAKGDLALAVDRHATSKLDDEDLLGIRTLGFRGEALPSIGAVARLCITTREAREPHAWSLTVEGGRKSEIIPAALTNGTRVEVGDLFYATPARLKFLKTDRTEAEAIREVVRRLAMARPDIGFTLAGEERAPVTWTAALPGAAGRLTRLGDILGGDFRAAAIPVRAEREGVIVEGFAAAPSLTRANALGQYLFVNGRPVRDKLILGAVRAAYSDYLPRDRHPVAALFVTADPREVDANVHPAKTEVRFRNAGLVRALIVHALKEGLAREGRRTAANRDGAVLTAFRPAPSPRPANWDWRESPAAPADARPWIGGPPAAAFAEAGQAALDVGAPSADVRFDAHPPLDLVDRPLGAARTQIHETYIVSQTRDGLIVVDQHAAHERIVYERLKTALARDGVQRQILLIPDIVELDEATVEKLIDRATELEKFGLAIESFGPGAVAVRETPSLLGKINAAALLRDLAEHMTEWEETLPLERRLMHVAATMACHGSVRAGRILKPEEMNALLREMEATPNSGQCNHGRPTYVELKLDDIEKLFGRR.

This sequence belongs to the DNA mismatch repair MutL/HexB family.

Functionally, this protein is involved in the repair of mismatches in DNA. It is required for dam-dependent methyl-directed DNA mismatch repair. May act as a 'molecular matchmaker', a protein that promotes the formation of a stable complex between two or more DNA-binding proteins in an ATP-dependent manner without itself being part of a final effector complex. This is DNA mismatch repair protein MutL from Nitrobacter winogradskyi (strain ATCC 25391 / DSM 10237 / CIP 104748 / NCIMB 11846 / Nb-255).